Here is a 262-residue protein sequence, read N- to C-terminus: Hydroxyethylthiazole kinase (262 aa).

A substrate-binding site is contributed by Met50. ATP is bound by residues Arg125 and Thr171. Residue Gly198 participates in substrate binding.

The protein belongs to the Thz kinase family. Requires Mg(2+) as cofactor.

It catalyses the reaction 5-(2-hydroxyethyl)-4-methylthiazole + ATP = 4-methyl-5-(2-phosphooxyethyl)-thiazole + ADP + H(+). The protein operates within cofactor biosynthesis; thiamine diphosphate biosynthesis; 4-methyl-5-(2-phosphoethyl)-thiazole from 5-(2-hydroxyethyl)-4-methylthiazole: step 1/1. Catalyzes the phosphorylation of the hydroxyl group of 4-methyl-5-beta-hydroxyethylthiazole (THZ). The sequence is that of Hydroxyethylthiazole kinase from Escherichia coli O45:K1 (strain S88 / ExPEC).